Reading from the N-terminus, the 385-residue chain is Taurine hydroxylase-like protein SAT17 (385 aa).

It participates in mycotoxin biosynthesis. Its function is as follows. Taurine hydroxylase-like protein; part of the satratoxin SC3 cluster involved in the biosynthesis of satratoxins, trichothecene mycotoxins that are associated with human food poisonings. Satratoxins are suggested to be made by products of multiple gene clusters (SC1, SC2 and SC3) that encode 21 proteins in all, including polyketide synthases, acetyltransferases, and other enzymes expected to modify the trichothecene skeleton. SC1 encodes 10 proteins, SAT1 to SAT10. The largest are SAT8, which encodes a putative polyketide synthase (PKS) with a conventional non-reducing architecture, and SAT10, a putative protein containing four ankyrin repeats and thus may be involved in protein scaffolding. The putative short-chain reductase SAT3 may assist the PKS in some capacity. SAT6 contains a secretory lipase domain and acts probably as a trichothecene esterase. SAT5 encodes a putative acetyltransferase, and so, with SAT6, may affect endogenous protection from toxicity. The probable transcription factor SAT9 may regulate the expression of the SC1 cluster. SC2 encodes proteins SAT11 to SAT16, the largest of which encodes the putative reducing PKS SAT13. SAT11 is a cytochrome P450 monooxygenase, while SAT14 and SAT16 are probable acetyltransferases. The SC2 cluster may be regulated by the transcription factor SAT15. SC3 is a small cluster that encodes 5 proteins, SAT17 to SAT21. SAT21 is a putative MFS-type transporter which may have a role in exporting secondary metabolites. The four other proteins putatively encoded in SC3 include the taurine hydroxylase-like protein SAT17, the O-methyltransferase SAT18, the acetyltransferase SAT19, and the Cys6-type zinc finger SAT20, the latter being probably involved in regulation of SC3 expression. The sequence is that of Taurine hydroxylase-like protein SAT17 from Stachybotrys chartarum (strain CBS 109288 / IBT 7711) (Toxic black mold).